Here is a 378-residue protein sequence, read N- to C-terminus: Lysocardiolipin acyltransferase 1 (378 aa).

Helical transmembrane passes span 9 to 29 (FVVALFLGSFFGSIFMLGPFL) and 46 to 66 (IVATWLTLPVALLEMVFGAKV). The HXXXXD motif signature appears at 85 to 90 (HRTRMD). 2 helical membrane-spanning segments follow: residues 302–322 (LRVLAVKCISLLYWTVFPMGT) and 336–358 (FAAMIIIFVAQQKIFGGLELIEL).

This sequence belongs to the 1-acyl-sn-glycerol-3-phosphate acyltransferase family.

The protein resides in the endoplasmic reticulum membrane. The enzyme catalyses a 1-acyl-sn-glycero-3-phosphate + an acyl-CoA = a 1,2-diacyl-sn-glycero-3-phosphate + CoA. It carries out the reaction a 1-acyl-sn-glycero-3-phospho-(1D-myo-inositol) + an acyl-CoA = a 1,2-diacyl-sn-glycero-3-phospho-(1D-myo-inositol) + CoA. It catalyses the reaction 1-acyl-sn-glycero-3-phospho-(1'-sn-glycerol) + an acyl-CoA = a 1,2-diacyl-sn-glycero-3-phospho-(1'-sn-glycerol) + CoA. The catalysed reaction is 1-hexadecanoyl-sn-glycero-3-phosphate + (9Z)-octadecenoyl-CoA = 1-hexadecanoyl-2-(9Z-octadecenoyl)-sn-glycero-3-phosphate + CoA. The enzyme catalyses 1-(9Z-octadecenoyl)-sn-glycero-3-phosphate + (9Z)-octadecenoyl-CoA = 1,2-di-(9Z-octadecenoyl)-sn-glycero-3-phosphate + CoA. It carries out the reaction 1-(9Z,12Z)-octadecadienoyl-sn-glycero-3-phosphate + (9Z)-octadecenoyl-CoA = 1-(9Z,12Z)-octadecadienoyl-2-(9Z)-octadecenoyl-sn-glycero-3-phosphate + CoA. It catalyses the reaction 1-(9Z,12Z,15Z)-octadecatrienoyl-sn-glycero-3-phosphate + (9Z)-octadecenoyl-CoA = 1-(9Z,12Z,15Z)-octadecatrienoyl-2-(9Z)-octadecenoyl-sn-glycero-3-phosphate + CoA. The catalysed reaction is 1-(9Z-octadecenoyl)-sn-glycero-3-phosphate + hexadecanoyl-CoA = 1-(9Z)-octadecenoyl-2-hexadecanoyl-sn-glycero-3-phosphate + CoA. The enzyme catalyses 1-(9Z-octadecenoyl)-sn-glycero-3-phosphate + octadecanoyl-CoA = 1-(9Z-octadecenoyl)-2-octadecanoyl-sn-glycero-3-phosphate + CoA. It carries out the reaction 1-acyl-sn-glycero-3-phospho-(1'-sn-glycerol) + (9Z)-octadecenoyl-CoA = 1-acyl-2-(9Z-octadecenoyl)-sn-glycero-3-phospho-(1'-sn-glycerol) + CoA. It catalyses the reaction a 1-acyl-sn-glycero-3-phospho-(1D-myo-inositol) + (9Z)-octadecenoyl-CoA = a 1-acyl-2-(9Z-octadecenoyl)-sn-glycero-3-phospho-(1D-myo-inositol) + CoA. The catalysed reaction is 1-hexadecanoyl-sn-glycero-3-phospho-(1D-myo-inositol) + hexadecanoyl-CoA = 1,2-dihexadecanoyl-sn-glycero-3-phospho-(1D-myo-inositol) + CoA. The enzyme catalyses 1-hexadecanoyl-sn-glycero-3-phospho-(1D-myo-inositol) + octadecanoyl-CoA = 1-hexadecanoyl-2-octadecanoyl-sn-glycero-3-phospho-(1D-myo-inositol) + CoA. It carries out the reaction 1-hexadecanoyl-sn-glycero-3-phospho-(1D-myo-inositol) + (9Z)-octadecenoyl-CoA = 1-hexadecanoyl-2-(9Z-octadecenoyl)-sn-glycero-3-phospho-(1D-myo-inositol) + CoA. It catalyses the reaction 1-hexadecanoyl-sn-glycero-3-phospho-(1D-myo-inositol) + (9Z,12Z)-octadecadienoyl-CoA = 1-hexadecanoyl-2-(9Z,12Z-octadecadienoyl)-sn-glycero-3-phospho-(1D-myo-inositol) + CoA. The catalysed reaction is 1-hexadecanoyl-sn-glycero-3-phospho-(1D-myo-inositol) + (5Z,8Z,11Z,14Z)-eicosatetraenoyl-CoA = 1-hexadecanoyl-2-(5Z,8Z,11Z,14Z-eicosatetraenoyl)-sn-glycero-3-phospho-D-myo-inositol + CoA. The enzyme catalyses 1-hexadecanoyl-sn-glycero-3-phospho-(1'-sn-glycerol) + hexadecanoyl-CoA = 1,2-dihexadecanoyl-sn-glycero-3-phospho-(1'-sn-glycerol) + CoA. It carries out the reaction 1-hexadecanoyl-sn-glycero-3-phospho-(1'-sn-glycerol) + octadecanoyl-CoA = 1-hexadecanoyl-2-octadecanoyl-sn-glycero-3-phospho-(1'-sn-glycerol) + CoA. It catalyses the reaction 1-hexadecanoyl-sn-glycero-3-phospho-(1'-sn-glycerol) + (9Z)-octadecenoyl-CoA = 1-hexadecanoyl-2-(9Z-octadecenoyl)-sn-glycero-3-phospho-(1'-sn-glycerol) + CoA. The catalysed reaction is 1-hexadecanoyl-sn-glycero-3-phospho-(1'-sn-glycerol) + (9Z,12Z)-octadecadienoyl-CoA = 1-hexadecanoyl-2-(9Z,12Z-octadecadienoyl)-sn-glycero-3-phospho-(1'-sn-glycerol) + CoA. The enzyme catalyses 1-tetradecanoyl-sn-glycero-3-phospho-(1'-sn-glycerol) + (9Z)-octadecenoyl-CoA = 1-tetradecanoyl-2-(9Z-octadecenoyl)-sn-glycero-3-phospho-(1'-sn-glycerol) + CoA. It carries out the reaction 1-octadecanoyl-sn-glycero-3-phospho-(1'-sn-glycerol) + (9Z)-octadecenoyl-CoA = 1-octadecanoyl-2-(9Z-octadecenoyl)-sn-glycero-3-phospho-(1'-sn-glycerol) + CoA. It catalyses the reaction 1-(9Z-octadecenoyl)-sn-glycero-3-phospho-(1'-sn-glycerol) + (9Z)-octadecenoyl-CoA = 1,2-di-(9Z-octadecenoyl)-sn-glycero-3-phospho-(1'-sn-glycerol) + CoA. The catalysed reaction is 1-hexadecanoyl-sn-glycero-3-phospho-(1D-myo-inositol) + dodecanoyl-CoA = 1-hexadecanoyl-2-dodecanoyl-sn-glycero-3-phospho-(1D-myo-inositol) + CoA. The enzyme catalyses 1',3'-bis-[1-acyl-sn-glycero-3-phospho]-glycerol + (9Z)-octadecenoyl-CoA = 1'-[1-acyl-2-(9Z)-octadecenoyl-sn-glycero-3-phospho],3'-[1-acyl,2-hydroxy-sn-glycero-3-phospho]-glycerol + CoA. It carries out the reaction 1'-[1,2-diacyl-sn-glycero-3-phospho],3'-[1-acyl-sn-glycero-3-phospho]-glycerol + (9Z)-octadecenoyl-CoA = 1'-[1,2-diacyl-sn-glycero-3-phospho],3'-[1-acyl,2-(9Z)-octadecenoyl-sn-glycero-3-phospho]-glycerol + CoA. It catalyses the reaction 1'-[1,2-diacyl-sn-glycero-3-phospho],3'-[1-acyl-sn-glycero-3-phospho]-glycerol + (9Z,12Z)-octadecadienoyl-CoA = 1'-[1,2-diacyl-sn-glycero-3-phospho],3'-[1-acyl,2-(9Z,12Z)-octadecadienoyl-sn-glycero-3-phospho]-glycerol + CoA. The catalysed reaction is 1'-[1,2-diacyl-sn-glycero-3-phospho],3'-[1-acyl-sn-glycero-3-phospho]-glycerol + dodecanoyl-CoA = 1'-[1,2-diacyl-sn-glycero-3-phospho],3'-[1-acyl,2-dodecanoyl-sn-glycero-3-phospho]-glycerol + CoA. The enzyme catalyses 1',3'-bis-[1-acyl-sn-glycero-3-phospho]-glycerol + dodecanoyl-CoA = 1'-[1-acyl-2-dodecanoyl-sn-glycero-3-phospho],3'-[1-acyl,2-hydroxy-sn-glycero-3-phospho]-glycerol + CoA. It carries out the reaction a 1-acyl-sn-glycero-3-phosphate + (9Z)-octadecenoyl-CoA = a 1-acyl-2-(9Z-octadecenoyl)-sn-glycero-3-phosphate + CoA. It catalyses the reaction 1',3'-bis-[1-acyl-sn-glycero-3-phospho]-glycerol + (9Z,12Z)-octadecadienoyl-CoA = 1'-[1-acyl-2-(9Z,12Z)-octadecadienoyl-sn-glycero-3-phospho],3'-[1-acyl,2-hydroxy-sn-glycero-3-phospho]-glycerol + CoA. The catalysed reaction is 1',3'-bis-[1-acyl-sn-glycero-3-phospho]-glycerol + hexadecanoyl-CoA = 1'-[1-acyl-2-hexadecanoyl-sn-glycero-3-phospho],3'-[1-acyl,2-hydroxy-sn-glycero-3-phospho]-glycerol + CoA. The enzyme catalyses 1',3'-bis-[1-acyl-sn-glycero-3-phospho]-glycerol + octadecanoyl-CoA = 1'-[1-acyl-2-octadecanoyl-sn-glycero-3-phospho],3'-[1-acyl,2-hydroxy-sn-glycero-3-phospho]-glycerol + CoA. It carries out the reaction 1'-[1,2-diacyl-sn-glycero-3-phospho],3'-[1-acyl-sn-glycero-3-phospho]-glycerol + octanoyl-CoA = 1'-[1,2-diacyl-sn-glycero-3-phospho],3'-[1-acyl,2-octanoyl-sn-glycero-3-phospho]-glycerol + CoA. It catalyses the reaction 1',3'-bis-[1-acyl-sn-glycero-3-phospho]-glycerol + octanoyl-CoA = 1'-[1-acyl-2-octanoyl-sn-glycero-3-phospho],3'-[1-acyl,2-hydroxy-sn-glycero-3-phospho]-glycerol + CoA. The catalysed reaction is 1'-[1,2-diacyl-sn-glycero-3-phospho],3'-[1-acyl-sn-glycero-3-phospho]-glycerol + hexadecanoyl-CoA = 1'-[1,2-diacyl-sn-glycero-3-phospho],3'-[1-acyl,2-hexadecanoyl-sn-glycero-3-phospho]-glycerol + CoA. The enzyme catalyses 1'-[1,2-diacyl-sn-glycero-3-phospho],3'-[1-acyl-sn-glycero-3-phospho]-glycerol + (5Z,8Z,11Z,14Z)-eicosatetraenoyl-CoA = 1'-[1,2-diacyl-sn-glycero-3-phospho],3'-[1-acyl,2-(5Z,8Z,11Z,14Z)-eicosatetraenoyl-sn-glycero-3-phospho]-glycerol + CoA. It carries out the reaction 1',3'-bis-[1-acyl-sn-glycero-3-phospho]-glycerol + (5Z,8Z,11Z,14Z)-eicosatetraenoyl-CoA = 1'-[1-acyl-2-(5Z,8Z,11Z,14Z)-eicosatetraenoyl-sn-glycero-3-phospho],3'-[1-acyl,2-hydroxy-sn-glycero-3-phospho]-glycerol + CoA. It catalyses the reaction a 1-acyl-sn-glycero-3-phospho-(1D-myo-inositol) + octadecanoyl-CoA = a 1-acyl-2-octadecanoyl-sn-glycero-3-phospho-(1D-myo-inositol) + CoA. The catalysed reaction is a 2-acyl-sn-glycero-3-phospho-D-myo-inositol + octadecanoyl-CoA = 1-octadecanoyl-2-acyl-sn-glycero-3-phospho-1D-myo-inositol + CoA. The protein operates within phospholipid metabolism; CDP-diacylglycerol biosynthesis; CDP-diacylglycerol from sn-glycerol 3-phosphate: step 2/3. In terms of biological role, exhibits acyl-CoA:lysocardiolipin acyltransferase (ALCAT) activity; catalyzes the reacylation of lyso-cardiolipin to cardiolipin (CL), a key step in CL remodeling. Recognizes both monolysocardiolipin and dilysocardiolipin as substrates with a preference for linoleoyl-CoA and oleoyl-CoA as acyl donors. Also exhibits 1-acyl-sn-glycerol-3-phosphate acyltransferase activity (AGPAT) activity; converts 1-acyl-sn-glycerol-3- phosphate (lysophosphatidic acid or LPA) into 1,2-diacyl-sn-glycerol-3- phosphate (phosphatidic acid or PA) by incorporating an acyl moiety at the sn-2 position of the glycerol backbone. Possesses both lysophosphatidylinositol acyltransferase (LPIAT) and lysophosphatidylglycerol acyltransferase (LPGAT) activities. Required for establishment of the hematopoietic and endothelial lineages. The chain is Lysocardiolipin acyltransferase 1 (LCLAT1) from Gallus gallus (Chicken).